Reading from the N-terminus, the 42-residue chain is Potassium channel toxin gamma-KTx 3.4 (42 aa).

4 disulfides stabilise this stretch: Cys-5–Cys-23, Cys-11–Cys-34, Cys-20–Cys-39, and Cys-24–Cys-41.

This sequence belongs to the ergtoxin family. Gamma-KTx 3 subfamily. As to expression, expressed by the venom gland.

The protein localises to the secreted. Its function is as follows. Blocks Kv11/ERG potassium channels. This Centruroides gracilis (Slenderbrown scorpion) protein is Potassium channel toxin gamma-KTx 3.4.